The primary structure comprises 297 residues: Protease HtpX homolog (297 aa).

The next 2 membrane-spanning stretches (helical) occupy residues 5–25 (IFLF…VLTI) and 43–63 (LMAL…ISLG). Histidine 154 contributes to the Zn(2+) binding site. Residue glutamate 155 is part of the active site. Histidine 158 provides a ligand contact to Zn(2+). 2 consecutive transmembrane segments (helical) span residues 169–189 (LLQG…AWVA) and 203–223 (FIAM…VVFA). Residue glutamate 229 participates in Zn(2+) binding.

The protein belongs to the peptidase M48B family. Requires Zn(2+) as cofactor.

It is found in the cell membrane. The sequence is that of Protease HtpX homolog from Bacillus velezensis (strain DSM 23117 / BGSC 10A6 / LMG 26770 / FZB42) (Bacillus amyloliquefaciens subsp. plantarum).